Consider the following 512-residue polypeptide: MAATLTEAGTGPAATREFVEGWTLAQTLGEGAYGEVKLLINRQTGEAVAMKMVDLKKHPDAANSVRKEVCIQKMLQDKHILRFFGKRSQGSVEYIFLEYAAGGELFDRIEPDVGMPQHEAQRYFTQLLSGLNYLHQRGIAHRDLKPENLLLDEHDNVKISDFGMATMFRCKGKERLLDKRCGTLPYVAPEVLQKAYHAQPADLWSCGVILVTMLAGELPWDQPSTNCTEFTNWRDNDHWQLQTPWSKLDTLAISLLRKLLATSPGTRLTLEKTLDHKWCNMQFADNERSYDLVDSAAALEICSPKAKRQRLQSSAHLSNGLDDSISRNYCSQPMPTMRSDDDFNVRLGSGRSKEDGGDRQTLAQEARLSYSFSQPALLDDLLLATQMNQTQNASQNYFQRLVRRMTRFFVTTRWDDTIKRLVGTIERLGGYTCKFGDDGVVTVSTVDRNKLRLVFKAHIIEMDGKILVDCRLSKGCGLEFKRRFIKIKNALEDIVLKGPTTWPIAIATNSVP.

Residues 22–279 (WTLAQTLGEG…LEKTLDHKWC (258 aa)) enclose the Protein kinase domain. ATP-binding positions include 28-36 (LGEGAYGEV) and lysine 51. Residue aspartate 143 is the Proton acceptor of the active site. The segment at 335 to 360 (PTMRSDDDFNVRLGSGRSKEDGGDRQ) is disordered.

Belongs to the protein kinase superfamily. CAMK Ser/Thr protein kinase family. NIM1 subfamily. In terms of processing, phosphorylated in a MEI-41/ATR dependent manner in response to DNA damage or the presence of unreplicated DNA.

The protein localises to the nucleus. It catalyses the reaction L-seryl-[protein] + ATP = O-phospho-L-seryl-[protein] + ADP + H(+). The catalysed reaction is L-threonyl-[protein] + ATP = O-phospho-L-threonyl-[protein] + ADP + H(+). Serine/threonine-protein kinase which is required for checkpoint-mediated cell cycle arrest and activation of DNA repair in response to the presence of DNA damage or unreplicated DNA. May also negatively regulate cell cycle progression during unperturbed cell cycles. May phosphorylate the CDC25 phosphatase stg, which promotes its degradation. This results in increased inhibitory tyrosine phosphorylation of Cdk1-cyclin complexes and consequent inhibition of cell cycle progression. This Drosophila melanogaster (Fruit fly) protein is Serine/threonine-protein kinase grp.